We begin with the raw amino-acid sequence, 418 residues long: Protein fuzzy homolog (418 aa).

It belongs to the fuzzy family. In terms of assembly, component of the CPLANE (ciliogenesis and planar polarity effectors) complex, composed of INTU, FUZ and WDPCP. Interacts with CPLANE2. Interacts with CPLANE1.

The protein resides in the cytoplasm. It is found in the cytoskeleton. It localises to the cilium basal body. Functionally, probable planar cell polarity effector involved in cilium biogenesis. May regulate protein and membrane transport to the cilium. Proposed to function as core component of the CPLANE (ciliogenesis and planar polarity effectors) complex involved in the recruitment of peripheral IFT-A proteins to basal bodies. May regulate the morphogenesis of hair follicles which depends on functional primary cilia. Binds phosphatidylinositol 3-phosphate with highest affinity, followed by phosphatidylinositol 4-phosphate and phosphatidylinositol 5-phosphate. In Homo sapiens (Human), this protein is Protein fuzzy homolog (FUZ).